We begin with the raw amino-acid sequence, 158 residues long: Crossover junction endodeoxyribonuclease RuvC (158 aa).

Catalysis depends on residues Asp-7, Glu-66, and Asp-139. 3 residues coordinate Mg(2+): Asp-7, Glu-66, and Asp-139.

It belongs to the RuvC family. As to quaternary structure, homodimer which binds Holliday junction (HJ) DNA. The HJ becomes 2-fold symmetrical on binding to RuvC with unstacked arms; it has a different conformation from HJ DNA in complex with RuvA. In the full resolvosome a probable DNA-RuvA(4)-RuvB(12)-RuvC(2) complex forms which resolves the HJ. Mg(2+) serves as cofactor.

It is found in the cytoplasm. It catalyses the reaction Endonucleolytic cleavage at a junction such as a reciprocal single-stranded crossover between two homologous DNA duplexes (Holliday junction).. Functionally, the RuvA-RuvB-RuvC complex processes Holliday junction (HJ) DNA during genetic recombination and DNA repair. Endonuclease that resolves HJ intermediates. Cleaves cruciform DNA by making single-stranded nicks across the HJ at symmetrical positions within the homologous arms, yielding a 5'-phosphate and a 3'-hydroxyl group; requires a central core of homology in the junction. The consensus cleavage sequence is 5'-(A/T)TT(C/G)-3'. Cleavage occurs on the 3'-side of the TT dinucleotide at the point of strand exchange. HJ branch migration catalyzed by RuvA-RuvB allows RuvC to scan DNA until it finds its consensus sequence, where it cleaves and resolves the cruciform DNA. The polypeptide is Crossover junction endodeoxyribonuclease RuvC (Campylobacter jejuni subsp. jejuni serotype O:6 (strain 81116 / NCTC 11828)).